The sequence spans 460 residues: 3-isopropylmalate dehydratase large subunit (460 aa).

The [4Fe-4S] cluster site is built by Cys-338, Cys-398, and Cys-401.

This sequence belongs to the aconitase/IPM isomerase family. LeuC type 1 subfamily. In terms of assembly, heterodimer of LeuC and LeuD. Requires [4Fe-4S] cluster as cofactor.

It carries out the reaction (2R,3S)-3-isopropylmalate = (2S)-2-isopropylmalate. It functions in the pathway amino-acid biosynthesis; L-leucine biosynthesis; L-leucine from 3-methyl-2-oxobutanoate: step 2/4. In terms of biological role, catalyzes the isomerization between 2-isopropylmalate and 3-isopropylmalate, via the formation of 2-isopropylmaleate. This Streptococcus thermophilus (strain ATCC BAA-491 / LMD-9) protein is 3-isopropylmalate dehydratase large subunit.